A 487-amino-acid chain; its full sequence is E3 ubiquitin-protein ligase RNF8 (487 aa).

Residues 38-92 (VTIGRGFSVTYQLISKVCPLMISRNHCVLKQNPEGQWTIMDNKSLNGVWLNRERL) enclose the FHA domain. Residues 68-72 (QNPEG) are required for interaction with PIWIL1. Positions 135–195 (CLAPKNDHTT…PEKLHGKGEA (61 aa)) are disordered. At Ser-157 the chain carries Phosphoserine. Residues 184-193 (AEPEKLHGKG) are compositionally biased toward basic and acidic residues. The RING-type zinc finger occupies 405 to 443 (CIICSEYFIEAVTLNCAHSFCSFCISEWMKRKVECPICR).

The protein belongs to the RNF8 family. As to quaternary structure, homodimer. Forms a E2-E3 ubiquitin ligase complex composed of the RNF8 homodimer and a E2 heterodimer of UBE2N and UBE2V2. Interacts with class III E2s, including UBE2E1, UBE2E2, and UBE2E3 and with UBE2N. Interacts with RXRA. Interacts (via FHA domain) with phosphorylated HERC2 (via C-terminus). Interacts with PIWIL1; leading to sequester RNF8 in the cytoplasm. Interacts with WRAP53/TCAB1. Post-translationally, autoubiquitinated through 'Lys-48' and 'Lys-63' of ubiquitin. 'Lys-63' polyubiquitination is mediated by UBE2N. 'Lys-29'-type polyubiquitination is also observed, but it doesn't require its own functional RING-type zinc finger.

The protein localises to the nucleus. The protein resides in the cytoplasm. Its subcellular location is the midbody. It is found in the chromosome. It localises to the telomere. The catalysed reaction is S-ubiquitinyl-[E2 ubiquitin-conjugating enzyme]-L-cysteine + [acceptor protein]-L-lysine = [E2 ubiquitin-conjugating enzyme]-L-cysteine + N(6)-ubiquitinyl-[acceptor protein]-L-lysine.. It participates in protein modification; protein ubiquitination. In terms of biological role, E3 ubiquitin-protein ligase that plays a key role in DNA damage signaling via 2 distinct roles: by mediating the 'Lys-63'-linked ubiquitination of histones H2A and H2AX and promoting the recruitment of DNA repair proteins at double-strand breaks (DSBs) sites, and by catalyzing 'Lys-48'-linked ubiquitination to remove target proteins from DNA damage sites. Following DNA DSBs, it is recruited to the sites of damage by ATM-phosphorylated MDC1 and catalyzes the 'Lys-63'-linked ubiquitination of histones H2A and H2AX, thereby promoting the formation of TP53BP1 and BRCA1 ionizing radiation-induced foci (IRIF). Also controls the recruitment of UIMC1-BRCC3 (RAP80-BRCC36) and PAXIP1/PTIP to DNA damage sites. Promotes the recruitment of NBN to DNA damage sites by catalyzing 'Lys-6'-linked ubiquitination of NBN. Also recruited at DNA interstrand cross-links (ICLs) sites and catalyzes 'Lys-63'-linked ubiquitination of histones H2A and H2AX, leading to recruitment of FAAP20 and Fanconi anemia (FA) complex, followed by interstrand cross-link repair. H2A ubiquitination also mediates the ATM-dependent transcriptional silencing at regions flanking DSBs in cis, a mechanism to avoid collision between transcription and repair intermediates. Promotes the formation of 'Lys-63'-linked polyubiquitin chains via interactions with the specific ubiquitin-conjugating UBE2N/UBC13 and ubiquitinates non-histone substrates such as PCNA. Substrates that are polyubiquitinated at 'Lys-63' are usually not targeted for degradation. Also catalyzes the formation of 'Lys-48'-linked polyubiquitin chains via interaction with the ubiquitin-conjugating UBE2L6/UBCH8, leading to degradation of substrate proteins such as CHEK2, JMJD2A/KDM4A and KU80/XRCC5: it is still unclear how the preference toward 'Lys-48'- versus 'Lys-63'-linked ubiquitination is regulated but it could be due to RNF8 ability to interact with specific E2 specific ligases. For instance, interaction with phosphorylated HERC2 promotes the association between RNF8 and UBE2N/UBC13 and favors the specific formation of 'Lys-63'-linked ubiquitin chains. Promotes non-homologous end joining (NHEJ) by promoting the 'Lys-48'-linked ubiquitination and degradation the of KU80/XRCC5. Following DNA damage, mediates the ubiquitination and degradation of JMJD2A/KDM4A in collaboration with RNF168, leading to unmask H4K20me2 mark and promote the recruitment of TP53BP1 at DNA damage sites. Following DNA damage, mediates the ubiquitination and degradation of POLD4/p12, a subunit of DNA polymerase delta. In the absence of POLD4, DNA polymerase delta complex exhibits higher proofreading activity. In addition to its function in damage signaling, also plays a role in higher-order chromatin structure by mediating extensive chromatin decondensation. Involved in the activation of ATM by promoting histone H2B ubiquitination, which indirectly triggers histone H4 'Lys-16' acetylation (H4K16ac), establishing a chromatin environment that promotes efficient activation of ATM kinase. Required in the testis, where it plays a role in the replacement of histones during spermatogenesis. At uncapped telomeres, promotes the joining of deprotected chromosome ends by inducing H2A ubiquitination and TP53BP1 recruitment, suggesting that it may enhance cancer development by aggravating telomere-induced genome instability in case of telomeric crisis. Promotes the assembly of RAD51 at DNA DSBs in the absence of BRCA1 and TP53BP1 Also involved in class switch recombination in immune system, via its role in regulation of DSBs repair. May be required for proper exit from mitosis after spindle checkpoint activation and may regulate cytokinesis. May play a role in the regulation of RXRA-mediated transcriptional activity. Not involved in RXRA ubiquitination by UBE2E2. This chain is E3 ubiquitin-protein ligase RNF8, found in Rattus norvegicus (Rat).